The following is a 348-amino-acid chain: Protein RecA (348 aa).

65–72 (GPESSGKT) is a binding site for ATP.

The protein belongs to the RecA family.

It localises to the cytoplasm. Its function is as follows. Can catalyze the hydrolysis of ATP in the presence of single-stranded DNA, the ATP-dependent uptake of single-stranded DNA by duplex DNA, and the ATP-dependent hybridization of homologous single-stranded DNAs. It interacts with LexA causing its activation and leading to its autocatalytic cleavage. The protein is Protein RecA of Saccharophagus degradans (strain 2-40 / ATCC 43961 / DSM 17024).